Reading from the N-terminus, the 371-residue chain is 4-hydroxy-3-methylbut-2-en-1-yl diphosphate synthase (flavodoxin) (371 aa).

[4Fe-4S] cluster is bound by residues Cys270, Cys273, Cys305, and Glu312.

This sequence belongs to the IspG family. It depends on [4Fe-4S] cluster as a cofactor.

It carries out the reaction (2E)-4-hydroxy-3-methylbut-2-enyl diphosphate + oxidized [flavodoxin] + H2O + 2 H(+) = 2-C-methyl-D-erythritol 2,4-cyclic diphosphate + reduced [flavodoxin]. It participates in isoprenoid biosynthesis; isopentenyl diphosphate biosynthesis via DXP pathway; isopentenyl diphosphate from 1-deoxy-D-xylulose 5-phosphate: step 5/6. In terms of biological role, converts 2C-methyl-D-erythritol 2,4-cyclodiphosphate (ME-2,4cPP) into 1-hydroxy-2-methyl-2-(E)-butenyl 4-diphosphate. The protein is 4-hydroxy-3-methylbut-2-en-1-yl diphosphate synthase (flavodoxin) of Shewanella woodyi (strain ATCC 51908 / MS32).